A 436-amino-acid chain; its full sequence is Ribosomal protein uS12 methylthiotransferase RimO (436 aa).

An MTTase N-terminal domain is found at 2 to 117 (KNVGIISLGC…IAEVIEKIEK (116 aa)). [4Fe-4S] cluster contacts are provided by cysteine 11, cysteine 47, cysteine 80, cysteine 154, cysteine 158, and cysteine 161. The Radical SAM core domain occupies 140-369 (TTPNYYAYLK…MEIQKEISYQ (230 aa)). The TRAM domain occupies 372-436 (LSKVGKQLEV…AYEYDLVGEY (65 aa)).

This sequence belongs to the methylthiotransferase family. RimO subfamily. Requires [4Fe-4S] cluster as cofactor.

It is found in the cytoplasm. The enzyme catalyses L-aspartate(89)-[ribosomal protein uS12]-hydrogen + (sulfur carrier)-SH + AH2 + 2 S-adenosyl-L-methionine = 3-methylsulfanyl-L-aspartate(89)-[ribosomal protein uS12]-hydrogen + (sulfur carrier)-H + 5'-deoxyadenosine + L-methionine + A + S-adenosyl-L-homocysteine + 2 H(+). Catalyzes the methylthiolation of an aspartic acid residue of ribosomal protein uS12. This chain is Ribosomal protein uS12 methylthiotransferase RimO, found in Thermoanaerobacter sp. (strain X514).